We begin with the raw amino-acid sequence, 116 residues long: Thioredoxin H-type (116 aa).

A Thioredoxin domain is found at 2 to 115 (AEEAQVIACH…HKIAVHAPIT (114 aa)). Active-site nucleophile residues include C39 and C42. C39 and C42 are oxidised to a cystine.

This sequence belongs to the thioredoxin family. Plant H-type subfamily.

The protein localises to the cytoplasm. Functionally, participates in various redox reactions through the reversible oxidation of the active center dithiol to a disulfide. The H form is known to activate a number of cytosolic enzymes. The polypeptide is Thioredoxin H-type (Fagopyrum esculentum (Common buckwheat)).